The chain runs to 584 residues: UBX domain-containing protein 2 (584 aa).

Topologically, residues 1–80 (MPVVNHEDSE…PTQTSTPMAE (80 aa)) are cytoplasmic. A helical transmembrane segment spans residues 81-101 (TLVPPALGPRPLLFTASLPVV). The Lumenal portion of the chain corresponds to 102–151 (RPLPANFRNDFRTIGLNGRSNTVWSMFESFSYDGNPFLFILLLIPRIINR). A helical membrane pass occupies residues 152 to 172 (LSATIFTFFCTLLSLHSISGG). Residues 173–584 (GNSGKPKISK…DEEDEENEEQ (412 aa)) are Cytoplasmic-facing. The UBX domain maps to 426 to 570 (ETTGKQATLQ…WPNGSLLVEA (145 aa)).

Component of the DOA10 ubiquitin ligase complex which contains E3 ligase SSM4/DOA10 and CDC48-binding protein UBX2/SEL1. Component of the HRD1 ubiquitin ligase complex which contains the E3 ligase HRD1, its cofactors HRD3, USA1 and DER1, substrate recruiting factor YOS9 and UBX2. In ERAD-L, HRD3 and YOS9 jointly bind misfolded glycoproteins in the endoplasmic reticulum (ER) lumen. Movement of ERAD-L substrates through the ER membrane is facilitated by HRD1 and DER1 which have lateral gates facing each other and which distort the membrane region between the lateral gates, making it much thinner than a normal phospholipid bilayer. Substrates insert into the membrane as a hairpin loop with one strand interacting with DER1 and the other with HRD1. Both the DOA10 and HRD1 ubiquitin ligase complexes interact with the heterotrimeric CDC48-NPL4-UFD1 ATPase complex which is recruited by UBX2 via its interaction with CDC48 and which moves ubiquitinated substrates to the cytosol for targeting to the proteasome.

It localises to the endoplasmic reticulum membrane. Integral endoplasmic reticulum membrane protein that coordinates the assembly of the ER-associated protein degradation (ERAD) machinery at the ER membrane. Mediates binding of CDC48 to the E3 ubiquitin ligases SSM4/DOA10 and HRD1, and to ERAD substrates. Component of the DOA10 ubiquitin ligase complex, which is part of the ERAD-C pathway responsible for the rapid degradation of membrane proteins with misfolded cytoplasmic domains. ERAD-C substrates are ubiquitinated through DOA10 in conjunction with the E2 ubiquitin-conjugating enzymes UBC6 and UBC7-CUE1. Also a component of the HRD1 ubiquitin ligase complex, which is part of the ERAD-L and ERAD-M pathways responsible for the rapid degradation of soluble lumenal and membrane proteins with misfolded lumenal domains (ERAD-L), or ER-membrane proteins with misfolded transmembrane domains (ERAD-M). ERAD-L substrates are ubiquitinated through HRD1 in conjunction with the E2 ubiquitin-conjugating enzymes UBC1 and UBC7-CUE1. Ubiquitinated substrates are then removed to the cytosol via the action of the CDC48-NPL4-UFD1 ATPase complex and targeted to the proteasome. This chain is UBX domain-containing protein 2 (UBX2), found in Saccharomyces cerevisiae (strain ATCC 204508 / S288c) (Baker's yeast).